Consider the following 60-residue polypeptide: Large ribosomal subunit protein uL30 (60 aa).

Belongs to the universal ribosomal protein uL30 family. Part of the 50S ribosomal subunit.

This Acidovorax ebreus (strain TPSY) (Diaphorobacter sp. (strain TPSY)) protein is Large ribosomal subunit protein uL30.